Consider the following 247-residue polypeptide: ABC-type transporter ATP-binding protein EcsA (247 aa).

Residues 4 to 234 enclose the ABC transporter domain; that stretch reads LSVKDLTGGY…FGMKDAALDD (231 aa). 36–43 is a binding site for ATP; sequence GLNGAGKS.

Belongs to the ABC transporter superfamily.

Has a role in exoprotein production, sporulation and competence. The chain is ABC-type transporter ATP-binding protein EcsA (ecsA) from Bacillus subtilis (strain 168).